The chain runs to 72 residues: Translation initiation factor IF-1 (72 aa).

Residues 1 to 72 (MAKEDVIEIE…TRGRITYRFK (72 aa)) enclose the S1-like domain.

Belongs to the IF-1 family. In terms of assembly, component of the 30S ribosomal translation pre-initiation complex which assembles on the 30S ribosome in the order IF-2 and IF-3, IF-1 and N-formylmethionyl-tRNA(fMet); mRNA recruitment can occur at any time during PIC assembly.

It is found in the cytoplasm. Functionally, one of the essential components for the initiation of protein synthesis. Stabilizes the binding of IF-2 and IF-3 on the 30S subunit to which N-formylmethionyl-tRNA(fMet) subsequently binds. Helps modulate mRNA selection, yielding the 30S pre-initiation complex (PIC). Upon addition of the 50S ribosomal subunit IF-1, IF-2 and IF-3 are released leaving the mature 70S translation initiation complex. This chain is Translation initiation factor IF-1, found in Streptococcus mutans serotype c (strain ATCC 700610 / UA159).